Here is a 235-residue protein sequence, read N- to C-terminus: MSRPVIVALDLDNEKKLNELLPKLGKPENVFIKIGMELFFNEGPKIVKQLSEQGYQIFLDLKMNDIPNTVYNGAKALARLGITYTTVHALGGSQMIKAAKDGLIAGTPIDKNVPKLLAVTELTSISDEILHYEQNCNLSMNDQVLSLATTAKKAGADGVICSPLEVKDLRQKVGEDFLYVTPGIRPAGNAKDDQSRVATPLQAKEWGSTAIVVGRPITLATDPEAAYEAIKKEFN.

Substrate-binding positions include D10, K33, 60–69, T123, R185, Q194, G214, and R215; that span reads DLKMNDIPNT. The Proton donor role is filled by K62.

This sequence belongs to the OMP decarboxylase family. Type 1 subfamily. As to quaternary structure, homodimer.

The enzyme catalyses orotidine 5'-phosphate + H(+) = UMP + CO2. Its pathway is pyrimidine metabolism; UMP biosynthesis via de novo pathway; UMP from orotate: step 2/2. Its function is as follows. Catalyzes the decarboxylation of orotidine 5'-monophosphate (OMP) to uridine 5'-monophosphate (UMP). The polypeptide is Orotidine 5'-phosphate decarboxylase (Lactobacillus johnsonii (strain CNCM I-12250 / La1 / NCC 533)).